A 395-amino-acid polypeptide reads, in one-letter code: Phosphoglycerate kinase (395 aa).

Residues 21–23 (DFN), Arg36, 59–62 (HLGR), Arg120, and Arg153 each bind substrate. ATP-binding positions include Lys203, Glu325, and 351 to 354 (GGDS).

The protein belongs to the phosphoglycerate kinase family. In terms of assembly, monomer.

Its subcellular location is the cytoplasm. It catalyses the reaction (2R)-3-phosphoglycerate + ATP = (2R)-3-phospho-glyceroyl phosphate + ADP. Its pathway is carbohydrate degradation; glycolysis; pyruvate from D-glyceraldehyde 3-phosphate: step 2/5. The protein is Phosphoglycerate kinase of Roseiflexus castenholzii (strain DSM 13941 / HLO8).